The sequence spans 335 residues: Probable nicotianamine synthase 2 (335 aa).

The protein belongs to the nicotianamine synthase (NAS)-like family.

The catalysed reaction is 3 S-adenosyl-L-methionine = nicotianamine + 3 S-methyl-5'-thioadenosine + 3 H(+). In terms of biological role, synthesizes nicotianamine, a polyamine that is the first intermediate in the synthesis of the phytosiderophores of the mugineic acid type found in gramineae which serves as a sensor for the physiological iron status within the plant, and/or might be involved in the transport of iron. The polypeptide is Probable nicotianamine synthase 2 (NAS2) (Hordeum vulgare (Barley)).